The following is a 77-amino-acid chain: uncharacterized protein (77 aa).

Residues 49 to 71 traverse the membrane as a helical segment; it reads LVIASLILAIILLGILYYISYQM.

It localises to the membrane. This is an uncharacterized protein from Archaeoglobus fulgidus (strain ATCC 49558 / DSM 4304 / JCM 9628 / NBRC 100126 / VC-16).